We begin with the raw amino-acid sequence, 270 residues long: Tetraspanin-17 (270 aa).

Residues 1–19 lie on the Cytoplasmic side of the membrane; it reads MPGKHQHFQEPEVGCCGKY. Residues 20–40 traverse the membrane as a helical segment; the sequence is FLFGFNIVFWVLGALFLAIGL. Over 41 to 63 the chain is Extracellular; sequence WAWGEKGVLSNISALTDLGGLDP. An N-linked (GlcNAc...) asparagine glycan is attached at Asn51. A helical membrane pass occupies residues 64 to 84; it reads VWLFVVVGGVMSVLGFAGCIG. Residues 85-94 are Cytoplasmic-facing; sequence ALRENTFLLK. Residues 95–115 form a helical membrane-spanning segment; that stretch reads FFSVFLGLIFFLELATGILAF. Residues 116 to 234 lie on the Extracellular side of the membrane; sequence VFKDWIRDQL…GQFEKWLQDN (119 aa). 4 disulfides stabilise this stretch: Cys155–Cys223, Cys156–Cys188, Cys172–Cys182, and Cys189–Cys202. N-linked (GlcNAc...) asparagine glycosylation is present at Asn171. The helical transmembrane segment at 235–255 threads the bilayer; it reads LIVVAGVFMGIALLQIFGICL. Over 256–270 the chain is Cytoplasmic; the sequence is AQNLVSDIKAVKANW.

Belongs to the tetraspanin (TM4SF) family. As to quaternary structure, interacts with ADAM10; the interaction influences ADAM10 substrate specificity, endocytosis and turnover.

The protein localises to the cell membrane. Its function is as follows. Part of TspanC8 subgroup, composed of 6 members that interact with the transmembrane metalloprotease ADAM10. This interaction is required for ADAM10 exit from the endoplasmic reticulum and for enzymatic maturation and trafficking to the cell surface as well as substrate specificity. Different TspanC8/ADAM10 complexes have distinct substrates. Seems to regulate VE-cadherin expression in endothelial cells probably through interaction with ADAM10, promoting leukocyte transmigration. This Homo sapiens (Human) protein is Tetraspanin-17.